Consider the following 184-residue polypeptide: Large ribosomal subunit protein uL5 (184 aa).

It belongs to the universal ribosomal protein uL5 family. As to quaternary structure, part of the 50S ribosomal subunit; part of the 5S rRNA/L5/L18/L25 subcomplex. Contacts the 5S rRNA and the P site tRNA. Forms a bridge to the 30S subunit in the 70S ribosome.

Functionally, this is one of the proteins that bind and probably mediate the attachment of the 5S RNA into the large ribosomal subunit, where it forms part of the central protuberance. In the 70S ribosome it contacts protein S13 of the 30S subunit (bridge B1b), connecting the 2 subunits; this bridge is implicated in subunit movement. Contacts the P site tRNA; the 5S rRNA and some of its associated proteins might help stabilize positioning of ribosome-bound tRNAs. The protein is Large ribosomal subunit protein uL5 of Ureaplasma urealyticum serovar 10 (strain ATCC 33699 / Western).